Here is a 322-residue protein sequence, read N- to C-terminus: Secretion system apparatus protein SsaQ (322 aa).

This sequence belongs to the FliN/MopA/SpaO family.

In terms of biological role, part of a type III secretion system. This Salmonella typhimurium (strain LT2 / SGSC1412 / ATCC 700720) protein is Secretion system apparatus protein SsaQ (ssaQ).